Reading from the N-terminus, the 293-residue chain is Phosphate-binding protein PstS 2 (293 aa).

A signal peptide spans 1 to 23 (MKKHKMLSLLAVSGLMGIGILAG). Cys24 is lipidated: N-palmitoyl cysteine. Residue Cys24 is the site of S-diacylglycerol cysteine attachment.

This sequence belongs to the PstS family. The complex is composed of two ATP-binding proteins (PstB), two transmembrane proteins (PstC and PstA) and a solute-binding protein (PstS).

The protein resides in the cell membrane. Its function is as follows. Part of the ABC transporter complex PstSACB involved in phosphate import. The protein is Phosphate-binding protein PstS 2 (pstS2) of Streptococcus agalactiae serotype III (strain NEM316).